A 158-amino-acid chain; its full sequence is 6,7-dimethyl-8-ribityllumazine synthase (158 aa).

5-amino-6-(D-ribitylamino)uracil-binding positions include Phe-24, 58-60 (AFE), and 82-84 (AVI). 87 to 88 (GT) contributes to the (2S)-2-hydroxy-3-oxobutyl phosphate binding site. His-90 functions as the Proton donor in the catalytic mechanism. Phe-115 provides a ligand contact to 5-amino-6-(D-ribitylamino)uracil. Arg-129 serves as a coordination point for (2S)-2-hydroxy-3-oxobutyl phosphate.

This sequence belongs to the DMRL synthase family. As to quaternary structure, forms an icosahedral capsid composed of 60 subunits, arranged as a dodecamer of pentamers.

The catalysed reaction is (2S)-2-hydroxy-3-oxobutyl phosphate + 5-amino-6-(D-ribitylamino)uracil = 6,7-dimethyl-8-(1-D-ribityl)lumazine + phosphate + 2 H2O + H(+). It functions in the pathway cofactor biosynthesis; riboflavin biosynthesis; riboflavin from 2-hydroxy-3-oxobutyl phosphate and 5-amino-6-(D-ribitylamino)uracil: step 1/2. Its function is as follows. Catalyzes the formation of 6,7-dimethyl-8-ribityllumazine by condensation of 5-amino-6-(D-ribitylamino)uracil with 3,4-dihydroxy-2-butanone 4-phosphate. This is the penultimate step in the biosynthesis of riboflavin. The protein is 6,7-dimethyl-8-ribityllumazine synthase of Pseudomonas paraeruginosa (strain DSM 24068 / PA7) (Pseudomonas aeruginosa (strain PA7)).